We begin with the raw amino-acid sequence, 118 residues long: MPFSKLGRNKSQRRALLRTLMTDLIVQEKIMITESKAKELQKLADKMVTLSKKNTLHTRRQAKRHLFDEKINDDTTVLQKLFKDISSKYLDRQGGYTRVIKTVPRRGDGAPMAIIAFV.

The protein belongs to the bacterial ribosomal protein bL17 family. In terms of assembly, part of the 50S ribosomal subunit. Contacts protein L32.

The polypeptide is Large ribosomal subunit protein bL17 (Onion yellows phytoplasma (strain OY-M)).